Reading from the N-terminus, the 100-residue chain is MTKVQPRALADLIKRPIITEKATVLLENNQYTFDVDRRATKPQIKAAIEELFNVKVTAVNTYHLPPKERRVGRFVGRRPRYKRAIVTLAPDSKIVLFPEV.

This sequence belongs to the universal ribosomal protein uL23 family. As to quaternary structure, part of the 50S ribosomal subunit. Contacts protein L29, and trigger factor when it is bound to the ribosome.

Its function is as follows. One of the early assembly proteins it binds 23S rRNA. One of the proteins that surrounds the polypeptide exit tunnel on the outside of the ribosome. Forms the main docking site for trigger factor binding to the ribosome. The protein is Large ribosomal subunit protein uL23 of Thermosynechococcus vestitus (strain NIES-2133 / IAM M-273 / BP-1).